We begin with the raw amino-acid sequence, 64 residues long: Large ribosomal subunit protein bL28 (64 aa).

This sequence belongs to the bacterial ribosomal protein bL28 family.

The sequence is that of Large ribosomal subunit protein bL28 from Bifidobacterium adolescentis (strain ATCC 15703 / DSM 20083 / NCTC 11814 / E194a).